A 130-amino-acid chain; its full sequence is Small ribosomal subunit protein uS11c (130 aa).

This sequence belongs to the universal ribosomal protein uS11 family. Part of the 30S ribosomal subunit.

It is found in the plastid. The protein localises to the chloroplast. This chain is Small ribosomal subunit protein uS11c, found in Physcomitrium patens (Spreading-leaved earth moss).